The chain runs to 367 residues: Chorismate synthase (367 aa).

Residues Arg-48 and Arg-54 each coordinate NADP(+). FMN contacts are provided by residues 125-127, 238-239, Gly-278, 293-297, and Arg-319; these read RSS, NA, and KPTSS.

Belongs to the chorismate synthase family. As to quaternary structure, homotetramer. Requires FMNH2 as cofactor.

The enzyme catalyses 5-O-(1-carboxyvinyl)-3-phosphoshikimate = chorismate + phosphate. It participates in metabolic intermediate biosynthesis; chorismate biosynthesis; chorismate from D-erythrose 4-phosphate and phosphoenolpyruvate: step 7/7. Its function is as follows. Catalyzes the anti-1,4-elimination of the C-3 phosphate and the C-6 proR hydrogen from 5-enolpyruvylshikimate-3-phosphate (EPSP) to yield chorismate, which is the branch point compound that serves as the starting substrate for the three terminal pathways of aromatic amino acid biosynthesis. This reaction introduces a second double bond into the aromatic ring system. This is Chorismate synthase from Xanthomonas campestris pv. campestris (strain B100).